A 456-amino-acid chain; its full sequence is Chromosomal replication initiator protein DnaA (456 aa).

The interval 1 to 83 is domain I, interacts with DnaA modulators; sequence MKLKILHFTS…DAFEEESNNG (83 aa). Positions 83–116 are domain II; that stretch reads GVRPEIHIKVKEKKENVKSLKNNKSMLYFNTNGL. A domain III, AAA+ region region spans residues 117 to 331; that stretch reads SLNPFYTFEN…GILSTINAHI (215 aa). Gly-161, Gly-163, Lys-164, and Thr-165 together coordinate ATP. The domain IV, binds dsDNA stretch occupies residues 332 to 456; it reads NLSPESSSLK…SKIQQSLDSV (125 aa).

It belongs to the DnaA family. As to quaternary structure, oligomerizes as a right-handed, spiral filament on DNA at oriC.

It is found in the cytoplasm. In terms of biological role, plays an essential role in the initiation and regulation of chromosomal replication. ATP-DnaA binds to the origin of replication (oriC) to initiate formation of the DNA replication initiation complex once per cell cycle. Binds the DnaA box (a 9 base pair repeat at the origin) and separates the double-stranded (ds)DNA. Forms a right-handed helical filament on oriC DNA; dsDNA binds to the exterior of the filament while single-stranded (ss)DNA is stabiized in the filament's interior. The ATP-DnaA-oriC complex binds and stabilizes one strand of the AT-rich DNA unwinding element (DUE), permitting loading of DNA polymerase. After initiation quickly degrades to an ADP-DnaA complex that is not apt for DNA replication. Binds acidic phospholipids. In Helicobacter hepaticus (strain ATCC 51449 / 3B1), this protein is Chromosomal replication initiator protein DnaA.